The following is a 141-amino-acid chain: Protein KRTCAP2 homolog (141 aa).

Helical transmembrane passes span 11 to 31 (VVSS…LRFC), 42 to 62 (VLLG…CVSN), 74 to 94 (AKLL…AGLV), and 97 to 117 (VCAT…NRIS).

The protein belongs to the KRTCAP2 family. In terms of assembly, component of the oligosaccharyltransferase (OST) complex.

The protein localises to the membrane. Its function is as follows. Subunit of the oligosaccharyl transferase (OST) complex that catalyzes the initial transfer of a defined glycan (Glc(3)Man(9)GlcNAc(2) in eukaryotes) from the lipid carrier dolichol-pyrophosphate to an asparagine residue within an Asn-X-Ser/Thr consensus motif in nascent polypeptide chains, the first step in protein N-glycosylation. N-glycosylation occurs cotranslationally and the complex associates with the Sec61 complex at the channel-forming translocon complex that mediates protein translocation across the endoplasmic reticulum (ER). All subunits are required for a maximal enzyme activity. The protein is Protein KRTCAP2 homolog of Drosophila melanogaster (Fruit fly).